A 211-amino-acid polypeptide reads, in one-letter code: MFIKICGIKTPEELEIVENYGNATGVILECSSKRRIGFETAKNLVNLSNIPVFAVSTTSKVSVWENIIELTGTNYLQMHSDIDQKAIDFIKNEYGCFIMKSFKIPEKSESPENDAEKIISDIESYEVDRILLDTGKGCGQTHDHRISQIIAKKFEIVLAGGLDPDNVFEIVKVVNPFGVDVSSGVENNNSKDEELIKRFCENVKLGENYEM.

Belongs to the TrpF family.

The catalysed reaction is N-(5-phospho-beta-D-ribosyl)anthranilate = 1-(2-carboxyphenylamino)-1-deoxy-D-ribulose 5-phosphate. The protein operates within amino-acid biosynthesis; L-tryptophan biosynthesis; L-tryptophan from chorismate: step 3/5. The chain is N-(5'-phosphoribosyl)anthranilate isomerase from Methanococcus maripaludis (strain C6 / ATCC BAA-1332).